Consider the following 225-residue polypeptide: Mitochondrial inner membrane protease ATP23 (225 aa).

An a divalent metal cation-binding site is contributed by His124. Glu125 is an active-site residue. His128 is an a divalent metal cation binding site.

Belongs to the peptidase M76 family.

It localises to the mitochondrion inner membrane. Its function is as follows. Has a dual role in the assembly of mitochondrial ATPase. Acts as a protease that removes N-terminal residues of mitochondrial ATPase CF(0) subunit 6 at the intermembrane space side. Also involved in the correct assembly of the membrane-embedded ATPase CF(0) particle, probably mediating association of subunit 6 with the subunit 9 ring. This chain is Mitochondrial inner membrane protease ATP23 (ATP23), found in Candida glabrata (strain ATCC 2001 / BCRC 20586 / JCM 3761 / NBRC 0622 / NRRL Y-65 / CBS 138) (Yeast).